The sequence spans 153 residues: FAD synthase (153 aa).

Residues 9-10 (TF), 14-17 (HPGH), and D92 contribute to the ATP site.

Belongs to the archaeal FAD synthase family. Homodimer. It depends on a divalent metal cation as a cofactor.

It carries out the reaction FMN + ATP + H(+) = FAD + diphosphate. Its pathway is cofactor biosynthesis; FAD biosynthesis; FAD from FMN: step 1/1. In terms of biological role, catalyzes the transfer of the AMP portion of ATP to flavin mononucleotide (FMN) to produce flavin adenine dinucleotide (FAD) coenzyme. The protein is FAD synthase of Halorubrum lacusprofundi (strain ATCC 49239 / DSM 5036 / JCM 8891 / ACAM 34).